Consider the following 187-residue polypeptide: Tetratricopeptide repeat protein 36 (187 aa).

TPR repeat units lie at residues 47-80, 82-114, and 119-152; these read VKDL…LPQR, SAYN…SNGK, and CQAL…GSEF.

Belongs to the TTC36 family.

The sequence is that of Tetratricopeptide repeat protein 36 (ttc36) from Danio rerio (Zebrafish).